Here is an 815-residue protein sequence, read N- to C-terminus: Cilia- and flagella-associated protein 251 (815 aa).

WD repeat units follow at residues 58–99, 103–148, 166–205, 218–257, 271–308, 379–418, 420–460, 463–502, 511–553, and 573–612; these read GHTS…PTRT, PHRH…TPPE, PAGDVQHSIRFSPNNPAELISNGRRRVYFWSWAPGSPRFQ, QSVGDFVSSVFVPGTTQALTATTDGDLVVWDEQGIAAQVG, IHNCPITLLATVGDFIVSGGEDGYVRFFDPLLRIVAWF, SLLADVVDLAAHPTRAEFAVLGRDGGLQRWDSIAHCLLGG, AFER…DLYV, NTAAGLVRVAVSNTGKHIAAADENHQLLLYAYLPYKHTMR, SHHG…VAAG, and SFAPPLAYFQAFAADTHLLVSGADGTVASWDINTAPLERS.

Identified in a spoke-associated complex containing CFAP61, CFAP91 and CFAP251; the complex is associated with the radial spokes in the axoneme. The complex associates with Calmodulin; the association is calcium sensitive.

It localises to the cytoplasm. It is found in the cytoskeleton. Its subcellular location is the flagellum axoneme. Functionally, as component of a spoke-associated complex, regulates flagellar dynein activity by mediating regulatory signals between the radial spokes and dynein arms. This is Cilia- and flagella-associated protein 251 from Chlamydomonas reinhardtii (Chlamydomonas smithii).